The sequence spans 431 residues: Glucose-1-phosphate adenylyltransferase (431 aa).

Position 39 (Lys39) interacts with beta-D-fructose 1,6-bisphosphate. Residues Arg40, His46, and Arg52 each coordinate AMP. Position 114 (Tyr114) interacts with alpha-D-glucose 1-phosphate. An AMP-binding site is contributed by Arg130. Residues Gly179, 194 to 195, and Ser212 each bind alpha-D-glucose 1-phosphate; that span reads EK. The AMP site is built by Glu370 and Arg386. Residues 419–423 and 429–431 each bind beta-D-fructose 1,6-bisphosphate; these read REMLR and QER.

The protein belongs to the bacterial/plant glucose-1-phosphate adenylyltransferase family. In terms of assembly, homotetramer.

The enzyme catalyses alpha-D-glucose 1-phosphate + ATP + H(+) = ADP-alpha-D-glucose + diphosphate. It functions in the pathway glycan biosynthesis; glycogen biosynthesis. With respect to regulation, allosterically activated by fructose-1,6-bisphosphate (F16BP) and inhibited by AMP. Its function is as follows. Involved in the biosynthesis of ADP-glucose, a building block required for the elongation reactions to produce glycogen. Catalyzes the reaction between ATP and alpha-D-glucose 1-phosphate (G1P) to produce pyrophosphate and ADP-Glc. This is Glucose-1-phosphate adenylyltransferase from Salmonella paratyphi C (strain RKS4594).